Here is a 327-residue protein sequence, read N- to C-terminus: Mycothiol acetyltransferase (327 aa).

N-acetyltransferase domains are found at residues 11-159 and 162-327; these read EPHG…VTLP and VQIR…EGTS. Position 42 (E42) interacts with 1D-myo-inositol 2-(L-cysteinylamino)-2-deoxy-alpha-D-glucopyranoside. Acetyl-CoA is bound at residue 89–91; that stretch reads LVI. E189, K228, and E251 together coordinate 1D-myo-inositol 2-(L-cysteinylamino)-2-deoxy-alpha-D-glucopyranoside. Acetyl-CoA contacts are provided by residues 255-257 and 262-268; these read LGV and QGLGLGR. 1D-myo-inositol 2-(L-cysteinylamino)-2-deoxy-alpha-D-glucopyranoside is bound at residue Y289. Residue 294–299 participates in acetyl-CoA binding; sequence NAPAIR.

It belongs to the acetyltransferase family. MshD subfamily. Monomer.

The enzyme catalyses 1D-myo-inositol 2-(L-cysteinylamino)-2-deoxy-alpha-D-glucopyranoside + acetyl-CoA = mycothiol + CoA + H(+). Its function is as follows. Catalyzes the transfer of acetyl from acetyl-CoA to desacetylmycothiol (Cys-GlcN-Ins) to form mycothiol. This is Mycothiol acetyltransferase from Acidothermus cellulolyticus (strain ATCC 43068 / DSM 8971 / 11B).